A 131-amino-acid polypeptide reads, in one-letter code: Colicin-N immunity protein (131 aa).

A run of 2 helical transmembrane segments spans residues 66–84 (ILTPFTILYISMIYCFLLT) and 104–124 (VFVFFLYNTIYWDIYIHIFVL).

It is found in the cell membrane. This Escherichia coli protein is Colicin-N immunity protein (cni).